The following is a 364-amino-acid chain: D-alanine--D-alanine ligase (364 aa).

Residues 134-347 (RRLACINGLK…YPDLLDELIN (214 aa)) form the ATP-grasp domain. 167–222 (ASEFGWPLFVKPCSLGSSVGIHKANNMDELNAAVADALRYDEEILVEEFIVGREIE) is an ATP binding site. Positions 300, 314, and 316 each coordinate Mg(2+).

Belongs to the D-alanine--D-alanine ligase family. The cofactor is Mg(2+). It depends on Mn(2+) as a cofactor.

The protein localises to the cytoplasm. The enzyme catalyses 2 D-alanine + ATP = D-alanyl-D-alanine + ADP + phosphate + H(+). It participates in cell wall biogenesis; peptidoglycan biosynthesis. Cell wall formation. The protein is D-alanine--D-alanine ligase of Legionella pneumophila (strain Paris).